Reading from the N-terminus, the 152-residue chain is 3-hydroxyacyl-[acyl-carrier-protein] dehydratase FabZ (152 aa).

His54 is an active-site residue.

This sequence belongs to the thioester dehydratase family. FabZ subfamily.

Its subcellular location is the cytoplasm. The enzyme catalyses a (3R)-hydroxyacyl-[ACP] = a (2E)-enoyl-[ACP] + H2O. In terms of biological role, involved in unsaturated fatty acids biosynthesis. Catalyzes the dehydration of short chain beta-hydroxyacyl-ACPs and long chain saturated and unsaturated beta-hydroxyacyl-ACPs. The protein is 3-hydroxyacyl-[acyl-carrier-protein] dehydratase FabZ of Buchnera aphidicola subsp. Schizaphis graminum (strain Sg).